Reading from the N-terminus, the 367-residue chain is uncharacterized protein (367 aa).

Residues 333–367 (RERRPTLNAQRAHAAAQQQPRRRNRRQQGTGASAS) are disordered. The span at 341–351 (AQRAHAAAQQQ) shows a compositional bias: low complexity.

This is an uncharacterized protein from Amazona oratrix (yellow-headed parrot).